We begin with the raw amino-acid sequence, 177 residues long: MTTIVSVRRNGQVVIGGDGQVSLGNTVMKGNARKVHRLYNGKVLAGFAGGTADAFTLLERFEAKLQAHQGNLERAAVALAKDWRTDRALRRLEALLAVADEHKSFIITGNGDVVQPEHDLIAIGSGGNFAQSAAIALLENTELDAKSIVEKSLKIAGDICVFTNGNHTIEVLDYSAK.

Residue Thr2 is part of the active site. Na(+)-binding residues include Gly157, Cys160, and Thr163.

The protein belongs to the peptidase T1B family. HslV subfamily. A double ring-shaped homohexamer of HslV is capped on each side by a ring-shaped HslU homohexamer. The assembly of the HslU/HslV complex is dependent on binding of ATP.

Its subcellular location is the cytoplasm. It carries out the reaction ATP-dependent cleavage of peptide bonds with broad specificity.. Allosterically activated by HslU binding. Functionally, protease subunit of a proteasome-like degradation complex believed to be a general protein degrading machinery. The protein is ATP-dependent protease subunit HslV of Aeromonas hydrophila subsp. hydrophila (strain ATCC 7966 / DSM 30187 / BCRC 13018 / CCUG 14551 / JCM 1027 / KCTC 2358 / NCIMB 9240 / NCTC 8049).